A 120-amino-acid chain; its full sequence is Large ribosomal subunit protein eL18 (120 aa).

This sequence belongs to the eukaryotic ribosomal protein eL18 family.

This Thermoplasma acidophilum (strain ATCC 25905 / DSM 1728 / JCM 9062 / NBRC 15155 / AMRC-C165) protein is Large ribosomal subunit protein eL18.